Consider the following 101-residue polypeptide: Acylphosphatase-1 (101 aa).

The residue at position 2 (serine 2) is an N-acetylserine. Serine 2 is modified (N-acetylalanine). One can recognise an Acylphosphatase-like domain in the interval 11-101 (SVDYEIFGKV…LDYTDFQIVK (91 aa)). Active-site residues include arginine 26 and asparagine 44.

The protein belongs to the acylphosphatase family. As to expression, organ-common type isozyme is found in many different tissues.

The enzyme catalyses an acyl phosphate + H2O = a carboxylate + phosphate + H(+). The chain is Acylphosphatase-1 (ACYP1) from Bos taurus (Bovine).